A 288-amino-acid chain; its full sequence is Stress response protein YhaX (288 aa).

The chain is Stress response protein YhaX (yhaX) from Bacillus subtilis (strain 168).